A 342-amino-acid polypeptide reads, in one-letter code: Ferredoxin--NADP reductase (342 aa).

C17, D36, Q44, Y49, I89, F124, D289, and T330 together coordinate FAD.

The protein belongs to the ferredoxin--NADP reductase type 2 family. In terms of assembly, homodimer. The cofactor is FAD.

It catalyses the reaction 2 reduced [2Fe-2S]-[ferredoxin] + NADP(+) + H(+) = 2 oxidized [2Fe-2S]-[ferredoxin] + NADPH. The chain is Ferredoxin--NADP reductase from Rhodopseudomonas palustris (strain BisB5).